Reading from the N-terminus, the 362-residue chain is Methylthioribose-1-phosphate isomerase (362 aa).

Substrate-binding positions include 53–55 (RGA), Arg90, and Gln201. Residue Asp241 is the Proton donor of the active site. 251–252 (NK) contributes to the substrate binding site.

The protein belongs to the eIF-2B alpha/beta/delta subunits family. MtnA subfamily.

It carries out the reaction 5-(methylsulfanyl)-alpha-D-ribose 1-phosphate = 5-(methylsulfanyl)-D-ribulose 1-phosphate. Its pathway is amino-acid biosynthesis; L-methionine biosynthesis via salvage pathway; L-methionine from S-methyl-5-thio-alpha-D-ribose 1-phosphate: step 1/6. Catalyzes the interconversion of methylthioribose-1-phosphate (MTR-1-P) into methylthioribulose-1-phosphate (MTRu-1-P). This Dechloromonas aromatica (strain RCB) protein is Methylthioribose-1-phosphate isomerase.